Consider the following 399-residue polypeptide: Serine/threonine-protein kinase PKZ1 (399 aa).

Residues 30-50 (PMQCAYQTQSHSNPEGAKRGR) form a disordered region. The Protein kinase domain occupies 92–371 (WQLFDQIGAG…ADQMLQHPWM (280 aa)). Residues 98 to 106 (IGAGAFGVV) and Lys-121 each bind ATP. The active-site Proton acceptor is the Asp-219.

The protein belongs to the protein kinase superfamily. CAMK Ser/Thr protein kinase family.

The enzyme catalyses L-seryl-[protein] + ATP = O-phospho-L-seryl-[protein] + ADP + H(+). The catalysed reaction is L-threonyl-[protein] + ATP = O-phospho-L-threonyl-[protein] + ADP + H(+). Its function is as follows. May regulate an early stage of the zoospore pathway. The sequence is that of Serine/threonine-protein kinase PKZ1 from Phytophthora infestans (strain T30-4) (Potato late blight agent).